Reading from the N-terminus, the 291-residue chain is Proteasomal ubiquitin receptor ADRM1 homolog rpn1301 (291 aa).

In terms of domain architecture, Pru spans Met-1–Gln-114. The segment at Thr-135 to Glu-162 is disordered. Residues Ala-178–Ser-290 form the DEUBAD domain.

This sequence belongs to the ADRM1 family. Component of the 19S proteasome regulatory particle complex. The 2 S.pombe rpn13 homologs, rpn1301 and rpn1302 are present at a 0.2-1 ratio.

It is found in the cytoplasm. It localises to the nucleus. Functionally, component of the 26S proteasome, a multiprotein complex involved in the ATP-dependent degradation of ubiquitinated proteins. This complex plays a key role in the maintenance of protein homeostasis by removing misfolded or damaged proteins, which could impair cellular functions, and by removing proteins whose functions are no longer required. Therefore, the proteasome participates in numerous cellular processes, including cell cycle progression, apoptosis, or DNA damage repair. Within the complex, functions as a proteasomal ubiquitin receptor. The polypeptide is Proteasomal ubiquitin receptor ADRM1 homolog rpn1301 (rpn1301) (Schizosaccharomyces pombe (strain 972 / ATCC 24843) (Fission yeast)).